The chain runs to 202 residues: Cold-regulated 413 plasma membrane protein 4 (202 aa).

At 1-42 (MGRGEFLAMKTEENAANLINSDMNEFVAAAKKLVKDVGMLGG) the chain is on the extracellular side. A helical transmembrane segment spans residues 43 to 63 (VGFGTSVLQWAASIFAIYLLI). Residues 64–72 (LDRTNWKTK) are Cytoplasmic-facing. A helical transmembrane segment spans residues 73-93 (MLTTLLVPYIFFTLPSVIFQF). Topologically, residues 94–97 (FSGD) are extracellular. A helical transmembrane segment spans residues 98–118 (FGKWIALIAIIVRLFFPKEFP). A topological domain (cytoplasmic) is located at residue glutamate 119. A helical membrane pass occupies residues 120–140 (WLEIPVALILIVVVSPSLIAW). At 141–145 (TLRES) the chain is on the extracellular side. The helical transmembrane segment at 146 to 166 (WVGAVICLVIACYLFHEHIKA) threads the bilayer. Over 167–181 (SGGFKNSFTQKNGIS) the chain is Cytoplasmic. A helical transmembrane segment spans residues 182 to 202 (NTIGIVALLVYPVWTIFFHIF).

Belongs to the Cold-regulated 413 protein family.

The protein localises to the cell membrane. This chain is Cold-regulated 413 plasma membrane protein 4, found in Arabidopsis thaliana (Mouse-ear cress).